The primary structure comprises 420 residues: FAD-dependent monooxygenase ntnJ (420 aa).

Residues 12-31 (FRVIVVGAGIGGLSAAVALA) traverse the membrane as a helical segment. FAD-binding residues include Glu41 and Ala54. Residue Asn124 is glycosylated (N-linked (GlcNAc...) asparagine). The active site involves Arg187. Asn264 carries an N-linked (GlcNAc...) asparagine glycan. FAD is bound by residues Asp302 and Val315.

The protein belongs to the paxM FAD-dependent monooxygenase family. FAD is required as a cofactor.

Its subcellular location is the membrane. The protein operates within secondary metabolite biosynthesis; terpenoid biosynthesis. FAD-dependent monooxygenase; part of the gene cluster that mediates the biosynthesis of the meroterpenoids nectripenoids A and B, as well as cochliquninone D and isocochliquninone E. The pathway probably begins with the HR-PKS ntnH that catalyzes two chain-extension steps to form a reduced triketide, which then primes the SAT domain in the NR-PKS ntnG to initiate three more cycles of extension to give a linear hexaketide corresponding to the polyketide part of nectripenoids. The FAD-dependent monooxygenase ntnJ then performs an oxidative decarboxylation at C11 of the ntnH/ntnG product, via an electrophilic aromatic hydroxylation with concomitant ipso-decarboxylation. The membrane-bound polyprenyl transferase ntnF then introduces a farnesyl group before the FAD-dependent monooxygenase ntnK functions as the first epoxidase on terminal C12'-C13' olefin, followed by a second epoxidation on C7'-C8' catalyzed by ntnA. The terpene cyclase/mutase ntnI then initiates the sequential tricyclic ring formation through protonation of the terminal epoxide and catalyzes the regioselective and stereoselective 6/6/6-tricyclic ring formation. The cytochrome P450 monooxygenase ntnM may then hydroxylate C1'. This Nectria sp protein is FAD-dependent monooxygenase ntnJ.